The primary structure comprises 378 residues: IDS-type sesquiterpene synthase (378 aa).

Aspartate 120 and aspartate 124 together coordinate Mg(2+). The DDXXD motif signature appears at 120 to 124; that stretch reads DDYVD.

It belongs to the terpene synthase family. Mg(2+) is required as a cofactor. In terms of tissue distribution, highly expressed in male epidermal tissue associated with the cuticle of ventral sternites.

The catalysed reaction is (2Z,6E)-farnesyl diphosphate = (Z)-alpha-bisabolene + diphosphate. Its pathway is pheromone biosynthesis. Its function is as follows. Sesquiterpene alcohol synthase that catalyzes the formation of the pheromone precursor (Z)-alpha-bisabolene from (2Z,6E)-farnesyl diphosphate. In Nezara viridula (Southern green stink bug), this protein is IDS-type sesquiterpene synthase.